Here is a 668-residue protein sequence, read N- to C-terminus: Metastasis-associated protein MTA2 (668 aa).

The BAH domain occupies 1–144 (MAANMYRVGD…PVQKTLLADQ (144 aa)). Residues Ser52 and Ser54 each carry the phosphoserine modification. One can recognise an ELM2 domain in the interval 145–256 (GEIRVGCKYQ…KAMSTLVPQG (112 aa)). Lys152 is subject to N6-acetyllysine. Residues 263-315 (DEMEEWSASEAMLFEEALEKYGKDFNDIRQDFLPWKSLASIVQFYYMWKTTDR) form the SANT domain. The GATA-type; atypical zinc finger occupies 367–394 (CESCHTTQSAQWYAWGPPNMQCRLCASC). Residues 409–419 (QLEGATRGTTE) are compositionally biased toward polar residues. The tract at residues 409–437 (QLEGATRGTTEPHSRGHLSRPEAQSLSPY) is disordered. Phosphoserine occurs at positions 433 and 435. Lys460 is modified (N6-acetyllysine). Residue Lys492 forms a Glycyl lysine isopeptide (Lys-Gly) (interchain with G-Cter in SUMO2 and SUMO3); alternate linkage. A Glycyl lysine isopeptide (Lys-Gly) (interchain with G-Cter in SUMO2); alternate cross-link involves residue Lys492. Residue Lys508 forms a Glycyl lysine isopeptide (Lys-Gly) (interchain with G-Cter in SUMO2) linkage. An N6-acetyllysine mark is found at Lys522 and Lys531. Thr534 carries the post-translational modification Phosphothreonine. Ser548 is modified (phosphoserine). Residues Lys559 and Lys595 each participate in a glycyl lysine isopeptide (Lys-Gly) (interchain with G-Cter in SUMO2) cross-link. 2 disordered regions span residues 580-599 (ASGIRSSSQPAAKRQKLNPA) and 647-668 (PPVPLPAPSHPASTNEPIVLED).

The protein belongs to the metastasis-associated protein family. Component of the nucleosome remodeling and deacetylase (NuRD) repressor complex, composed of core proteins MTA1, MTA2, MTA3, RBBP4, RBBP7, HDAC1, HDAC2, MBD2, MBD3, and peripherally associated proteins CDK2AP1, CDK2AP2, GATAD2A, GATAD2B, CHD3, CHD4 and CHD5. The exact stoichiometry of the NuRD complex is unknown, and some subunits such as MBD2 and MBD3, GATAD2A and GATAD2B, and CHD3, CHD4 and CHD5 define mutually exclusive NuRD complexes. Interacts with CHD3. Interacts with CHD4. Interacts with GATAD2A. Interacts with HDAC7. Interacts with MBD3. Interacts with p53/TP53. Interacts with MINT. Interacts with PIMREG. Interacts with NACC2. Interacts with ERCC6. Interacts with PWWP2B. Interacts with transcription factor BCL11A. In terms of tissue distribution, widely expressed.

It localises to the nucleus. Functionally, may function as a transcriptional coregulator. Acts as a component of the histone deacetylase NuRD complex which participates in the remodeling of chromatin. In Homo sapiens (Human), this protein is Metastasis-associated protein MTA2 (MTA2).